Here is a 395-residue protein sequence, read N- to C-terminus: FAD-dependent monooxygenase cctM (395 aa).

The first 23 residues, 1–23 (MEPGTDVRRVLVIGAGAAGLLIA), serve as a signal peptide directing secretion. Residues E37, G52, and R112 each coordinate FAD. N-linked (GlcNAc...) asparagine glycosylation is found at N138 and N298. D306 is an FAD binding site.

The protein belongs to the paxM FAD-dependent monooxygenase family. The cofactor is FAD.

Its pathway is mycotoxin biosynthesis. Functionally, FAD-dependent monooxygenase; part of the gene cluster that mediates the biosynthesis of the mycotoxin cyclochlorotine, a hepatotoxic and carcinogenic cyclic chlorinated pentapeptide. The function of cctM within the pathway, if any, remains undetermined. The NRPS cctN initially catalyzes the condensation of L-serine (Ser), Pro, L-2-aminobutyrate (2Abu), Ser, and beta-Phe in this order to produce isocyclotine. After the dichlorination of Pro2 catalyzed by cctP2 to produce isocyclochlorotine, the cctO-mediated transacylation of isocyclochlorotine can furnish cyclochlorotine. The subsequent hydroxylation of cyclochlorotine by cctR yields hydroxycyclochlorotine as the final product. CctP1 probably acts as a phenylalanine aminomutase and provides the uncommon building block beta-Phe. Furthermore, 2Abu can be synthesized from threonine by one of the threonine dehydratases and transaminases localized outside of the cluster. The functions of the remaining proteins encoded by the cluster, cctM and cctT, have not been identified yet. This is FAD-dependent monooxygenase cctM from Talaromyces islandicus (Penicillium islandicum).